A 255-amino-acid chain; its full sequence is Ribosomal RNA small subunit methyltransferase G (255 aa).

Positions Met1–Arg44 are disordered. S-adenosyl-L-methionine is bound by residues Gly118, Leu123, Val169–Glu170, and Arg183.

This sequence belongs to the methyltransferase superfamily. RNA methyltransferase RsmG family.

The protein localises to the cytoplasm. It carries out the reaction guanosine(527) in 16S rRNA + S-adenosyl-L-methionine = N(7)-methylguanosine(527) in 16S rRNA + S-adenosyl-L-homocysteine. In terms of biological role, specifically methylates the N7 position of guanine in position 527 of 16S rRNA. The sequence is that of Ribosomal RNA small subunit methyltransferase G from Bordetella petrii (strain ATCC BAA-461 / DSM 12804 / CCUG 43448).